We begin with the raw amino-acid sequence, 255 residues long: Proteasome subunit alpha (255 aa).

It belongs to the peptidase T1A family. The 20S proteasome core is composed of 14 alpha and 14 beta subunits that assemble into four stacked heptameric rings, resulting in a barrel-shaped structure. The two inner rings, each composed of seven catalytic beta subunits, are sandwiched by two outer rings, each composed of seven alpha subunits. The catalytic chamber with the active sites is on the inside of the barrel. Has a gated structure, the ends of the cylinder being occluded by the N-termini of the alpha-subunits. Is capped at one or both ends by the proteasome regulatory ATPase, PAN.

It localises to the cytoplasm. Its activity is regulated as follows. The formation of the proteasomal ATPase PAN-20S proteasome complex, via the docking of the C-termini of PAN into the intersubunit pockets in the alpha-rings, triggers opening of the gate for substrate entry. Interconversion between the open-gate and close-gate conformations leads to a dynamic regulation of the 20S proteasome proteolysis activity. Its function is as follows. Component of the proteasome core, a large protease complex with broad specificity involved in protein degradation. This is Proteasome subunit alpha from Natronomonas pharaonis (strain ATCC 35678 / DSM 2160 / CIP 103997 / JCM 8858 / NBRC 14720 / NCIMB 2260 / Gabara) (Halobacterium pharaonis).